The chain runs to 202 residues: Small ribosomal subunit protein uS4 (202 aa).

The segment at 18-44 is disordered; that stretch reads LPGLTRKSARREYPPGQHGQGRRKRSE. Positions 90 to 152 constitute an S4 RNA-binding domain; sequence MRLDNTVFRL…DRSRKLIEAN (63 aa).

This sequence belongs to the universal ribosomal protein uS4 family. In terms of assembly, part of the 30S ribosomal subunit. Contacts protein S5. The interaction surface between S4 and S5 is involved in control of translational fidelity.

Functionally, one of the primary rRNA binding proteins, it binds directly to 16S rRNA where it nucleates assembly of the body of the 30S subunit. In terms of biological role, with S5 and S12 plays an important role in translational accuracy. The polypeptide is Small ribosomal subunit protein uS4 (Picosynechococcus sp. (strain ATCC 27264 / PCC 7002 / PR-6) (Agmenellum quadruplicatum)).